A 231-amino-acid polypeptide reads, in one-letter code: Cytochrome c oxidase assembly factor 7 (231 aa).

A2 is subject to N-acetylalanine. Sel1-like repeat units follow at residues 34–66, 68–104, 108–146, 147–183, and 184–219; these read PEGC…EKYG, GDSC…EKPG, VESC…DGGY, AASC…DLGH, and VWAC…QLHK.

This sequence belongs to the hcp beta-lactamase family. In terms of assembly, interacts with CHCHD4/MIA40 through transient intermolecular disulfide bonds.

It is found in the mitochondrion intermembrane space. Required for assembly of mitochondrial respiratory chain complex I and complex IV. This is Cytochrome c oxidase assembly factor 7 (Coa7) from Mus musculus (Mouse).